An 88-amino-acid polypeptide reads, in one-letter code: DNA-directed RNA polymerase subunit omega (88 aa).

Belongs to the RNA polymerase subunit omega family. The RNAP catalytic core consists of 2 alpha, 1 beta, 1 beta' and 1 omega subunit. When a sigma factor is associated with the core the holoenzyme is formed, which can initiate transcription.

It carries out the reaction RNA(n) + a ribonucleoside 5'-triphosphate = RNA(n+1) + diphosphate. Its function is as follows. Promotes RNA polymerase assembly. Latches the N- and C-terminal regions of the beta' subunit thereby facilitating its interaction with the beta and alpha subunits. In Haemophilus influenzae (strain PittEE), this protein is DNA-directed RNA polymerase subunit omega.